The primary structure comprises 145 residues: Large ribosomal subunit protein uL24 (145 aa).

Disordered stretches follow at residues 1–21 (MKFN…HFNA) and 122–145 (KAKS…KMQE). K136 participates in a covalent cross-link: Glycyl lysine isopeptide (Lys-Gly) (interchain with G-Cter in SUMO2). A Phosphothreonine modification is found at T139.

This sequence belongs to the universal ribosomal protein uL24 family. Component of the large ribosomal subunit. Interacts with DHX33. Post-translationally, ufmylated by UFL1 in response to endoplasmic reticulum stress, promoting reticulophagy of endoplasmic reticulum sheets.

It is found in the cytoplasm. In terms of biological role, component of the large ribosomal subunit. The ribosome is a large ribonucleoprotein complex responsible for the synthesis of proteins in the cell. This Bos taurus (Bovine) protein is Large ribosomal subunit protein uL24 (RPL26).